Reading from the N-terminus, the 426-residue chain is D-tagatose-1,6-bisphosphate aldolase subunit KbaZ (426 aa).

Belongs to the GatZ/KbaZ family. KbaZ subfamily. As to quaternary structure, forms a complex with KbaY.

Its pathway is carbohydrate metabolism; D-tagatose 6-phosphate degradation; D-glyceraldehyde 3-phosphate and glycerone phosphate from D-tagatose 6-phosphate: step 2/2. Functionally, component of the tagatose-1,6-bisphosphate aldolase KbaYZ that is required for full activity and stability of the Y subunit. Could have a chaperone-like function for the proper and stable folding of KbaY. When expressed alone, KbaZ does not show any aldolase activity. This Escherichia coli (strain 55989 / EAEC) protein is D-tagatose-1,6-bisphosphate aldolase subunit KbaZ.